The chain runs to 362 residues: Ferredoxin--NADP reductase 1 (362 aa).

FAD-binding residues include Asp-47, Gln-55, Tyr-60, Ala-100, Phe-141, Asp-309, and Ser-350.

Belongs to the ferredoxin--NADP reductase type 2 family. In terms of assembly, homodimer. FAD is required as a cofactor.

It carries out the reaction 2 reduced [2Fe-2S]-[ferredoxin] + NADP(+) + H(+) = 2 oxidized [2Fe-2S]-[ferredoxin] + NADPH. This Cupriavidus pinatubonensis (strain JMP 134 / LMG 1197) (Cupriavidus necator (strain JMP 134)) protein is Ferredoxin--NADP reductase 1.